The chain runs to 419 residues: O-antigen ligase (419 aa).

Over Met-1–Met-19 the chain is Cytoplasmic. Residues Ile-20–Val-38 traverse the membrane as a helical segment. The Periplasmic segment spans residues Asp-39 to Ser-43. The helical transmembrane segment at Ile-44 to Arg-61 threads the bilayer. Over Gly-62–Asn-71 the chain is Cytoplasmic. Residues Leu-72 to Ala-91 traverse the membrane as a helical segment. At Phe-92–Leu-107 the chain is on the periplasmic side. Residues Asn-108–Thr-125 traverse the membrane as a helical segment. At Ser-126–Ser-134 the chain is on the cytoplasmic side. Residues Val-135–Ile-153 form a helical membrane-spanning segment. Over Asn-154–Gly-167 the chain is Periplasmic. A helical membrane pass occupies residues Thr-168–Ile-187. Residues Leu-188–His-194 lie on the Cytoplasmic side of the membrane. Residues Pro-195–Leu-211 form a helical membrane-spanning segment. Topologically, residues Thr-212 to Ala-216 are periplasmic. Residues Thr-217 to Asn-234 traverse the membrane as a helical segment. Residues Lys-235–Phe-240 are Cytoplasmic-facing. A helical membrane pass occupies residues Thr-241–Asn-259. Residues Lys-260–Lys-348 are Periplasmic-facing. A helical transmembrane segment spans residues Gly-349–Ala-367. The Cytoplasmic portion of the chain corresponds to Tyr-368 to Ala-372. Residues Leu-373–Ile-391 traverse the membrane as a helical segment. Topologically, residues Ile-392 to Ser-396 are periplasmic. A helical transmembrane segment spans residues Ile-397–Asn-412. The Cytoplasmic segment spans residues Asn-413 to Asn-419.

Homodimer.

It localises to the cell inner membrane. The catalysed reaction is a lipid-linked O antigen + a lipid A-core oligosaccharide = a lipopolysaccharide + a polyisoprenyl diphosphate.. Its pathway is bacterial outer membrane biogenesis; lipopolysaccharide biosynthesis. Its activity is regulated as follows. Activity does not require ATP and magnesium ions. In terms of biological role, transferase involved in the biosynthesis of the lipopolysaccharide (LPS). In vitro, catalyzes the transfer of a polymerized O-antigen molecule from its polyprenyl diphosphate membrane anchor to a terminal sugar of the lipid A-core oligosaccharide, finalizing the biosynthesis of the lipopolysaccharide. The enzyme is functional and can be used to give diverse hybrid O-antigens in vitro, but K12 strains do not produce the O-antigen in vivo due to mutations in the rfb gene cluster. K12 strains are phenotypically rough, their lipopolysaccharide having a complete core structure, but no O-antigen. In highly mucoid K12 strains, WaaL can ligate colanic acid (CA or M-antigen) repeats to a significant proportion of lipopolysaccharide (LPS) core acceptor molecules, forming the LPS glycoform M(LPS). The attachment point was identified as O-7 of the L-glycero-D-manno-heptose of the outer LPS core, the same position used for O-antigen ligation. Cannot catalyze ATP hydrolysis in vitro. This chain is O-antigen ligase, found in Escherichia coli (strain K12).